We begin with the raw amino-acid sequence, 181 residues long: Adenylyl-sulfate kinase (181 aa).

Position 13–20 (13–20 (GVSGAGKS)) interacts with ATP. Residue serine 87 is the Phosphoserine intermediate of the active site.

The protein belongs to the APS kinase family.

It carries out the reaction adenosine 5'-phosphosulfate + ATP = 3'-phosphoadenylyl sulfate + ADP + H(+). It participates in sulfur metabolism; hydrogen sulfide biosynthesis; sulfite from sulfate: step 2/3. Functionally, catalyzes the synthesis of activated sulfate. The sequence is that of Adenylyl-sulfate kinase from Burkholderia ambifaria (strain ATCC BAA-244 / DSM 16087 / CCUG 44356 / LMG 19182 / AMMD) (Burkholderia cepacia (strain AMMD)).